Consider the following 269-residue polypeptide: uncharacterized protein (269 aa).

The stretch at V3–A66 forms a coiled coil. The disordered stretch occupies residues A83–E142. Residues E94–E111 show a composition bias toward acidic residues. Residues P112–S136 show a composition bias toward basic and acidic residues.

This is an uncharacterized protein from Archaeoglobus fulgidus (strain ATCC 49558 / DSM 4304 / JCM 9628 / NBRC 100126 / VC-16).